A 223-amino-acid chain; its full sequence is MKRTKSIHHASFRKSWSARHLTPVALAVTAVFMLAGCEKSDDTVSLYQNADDCSAANPGKSAECTTAYNNALKEAERTAPKYATREDCVAEFGEGQCQQAPAQAGMAPENQAQAQQSSGSFWMPLMAGYMMGRLMGGGAGFAQQPLFSSKNPASPAYGKYTDAAGKNYGAAQPGRTMTVPKTAMAPKPATTTTVTRGGFGESVAKQSTMQRSAAGTSTRSMGG.

Positions 178 to 195 are enriched in low complexity; that stretch reads TVPKTAMAPKPATTTTVT. A disordered region spans residues 178 to 223; the sequence is TVPKTAMAPKPATTTTVTRGGFGESVAKQSTMQRSAAGTSTRSMGG. Positions 204-223 are enriched in polar residues; it reads AKQSTMQRSAAGTSTRSMGG.

This sequence belongs to the UPF0441 family.

The chain is UPF0441 protein YgiB from Salmonella enteritidis PT4 (strain P125109).